The chain runs to 447 residues: Na(+)-translocating NADH-quinone reductase subunit A (447 aa).

Belongs to the NqrA family. Composed of six subunits; NqrA, NqrB, NqrC, NqrD, NqrE and NqrF.

The enzyme catalyses a ubiquinone + n Na(+)(in) + NADH + H(+) = a ubiquinol + n Na(+)(out) + NAD(+). In terms of biological role, NQR complex catalyzes the reduction of ubiquinone-1 to ubiquinol by two successive reactions, coupled with the transport of Na(+) ions from the cytoplasm to the periplasm. NqrA to NqrE are probably involved in the second step, the conversion of ubisemiquinone to ubiquinol. In Cellvibrio japonicus (strain Ueda107) (Pseudomonas fluorescens subsp. cellulosa), this protein is Na(+)-translocating NADH-quinone reductase subunit A.